A 307-amino-acid chain; its full sequence is Elongation factor Ts (307 aa).

The involved in Mg(2+) ion dislocation from EF-Tu stretch occupies residues 80–83; sequence TDFV.

It belongs to the EF-Ts family.

It is found in the cytoplasm. Its function is as follows. Associates with the EF-Tu.GDP complex and induces the exchange of GDP to GTP. It remains bound to the aminoacyl-tRNA.EF-Tu.GTP complex up to the GTP hydrolysis stage on the ribosome. This Azorhizobium caulinodans (strain ATCC 43989 / DSM 5975 / JCM 20966 / LMG 6465 / NBRC 14845 / NCIMB 13405 / ORS 571) protein is Elongation factor Ts.